The primary structure comprises 660 residues: Methionine--tRNA ligase (660 aa).

The short motif at 15 to 25 (YYPSDKLHIGH) is the 'HIGH' region element. Residues 311–315 (KMSKS) carry the 'KMSKS' region motif. Lys314 is an ATP binding site. The tract at residues 535–554 (LMGGSKKPEEAPKDEKEESD) is disordered. A compositionally biased stretch (basic and acidic residues) spans 540-550 (KKPEEAPKDEK). The 101-residue stretch at 560–660 (DFSKVELRIA…GALPNGSLVK (101 aa)) folds into the tRNA-binding domain.

This sequence belongs to the class-I aminoacyl-tRNA synthetase family. MetG type 2B subfamily. Homodimer.

The protein localises to the cytoplasm. The enzyme catalyses tRNA(Met) + L-methionine + ATP = L-methionyl-tRNA(Met) + AMP + diphosphate. In terms of biological role, is required not only for elongation of protein synthesis but also for the initiation of all mRNA translation through initiator tRNA(fMet) aminoacylation. The sequence is that of Methionine--tRNA ligase (metG) from Halalkalibacterium halodurans (strain ATCC BAA-125 / DSM 18197 / FERM 7344 / JCM 9153 / C-125) (Bacillus halodurans).